Reading from the N-terminus, the 101-residue chain is Small ribosomal subunit protein uS10 (101 aa).

It belongs to the universal ribosomal protein uS10 family. In terms of assembly, part of the 30S ribosomal subunit.

Functionally, involved in the binding of tRNA to the ribosomes. The sequence is that of Small ribosomal subunit protein uS10 from Mycobacterium avium (strain 104).